Reading from the N-terminus, the 371-residue chain is Dual-specificity RNA methyltransferase RlmN (371 aa).

Catalysis depends on Glu99, which acts as the Proton acceptor. The Radical SAM core domain maps to 106–333 (DDNRATLCIS…AIRRASKGQD (228 aa)). A disulfide bridge links Cys113 with Cys338. Positions 120, 124, and 127 each coordinate [4Fe-4S] cluster. Residues 165-166 (GE), Ser197, 219-221 (SLN), and Asn295 each bind S-adenosyl-L-methionine. The active-site S-methylcysteine intermediate is Cys338. Residues 345–371 (LTVSPPAQESERNSARPDRSQGKGKHL) form a disordered region. Over residues 353–365 (ESERNSARPDRSQ) the composition is skewed to basic and acidic residues.

This sequence belongs to the radical SAM superfamily. RlmN family. [4Fe-4S] cluster serves as cofactor.

The protein localises to the cytoplasm. The enzyme catalyses adenosine(2503) in 23S rRNA + 2 reduced [2Fe-2S]-[ferredoxin] + 2 S-adenosyl-L-methionine = 2-methyladenosine(2503) in 23S rRNA + 5'-deoxyadenosine + L-methionine + 2 oxidized [2Fe-2S]-[ferredoxin] + S-adenosyl-L-homocysteine. The catalysed reaction is adenosine(37) in tRNA + 2 reduced [2Fe-2S]-[ferredoxin] + 2 S-adenosyl-L-methionine = 2-methyladenosine(37) in tRNA + 5'-deoxyadenosine + L-methionine + 2 oxidized [2Fe-2S]-[ferredoxin] + S-adenosyl-L-homocysteine. Functionally, specifically methylates position 2 of adenine 2503 in 23S rRNA and position 2 of adenine 37 in tRNAs. m2A2503 modification seems to play a crucial role in the proofreading step occurring at the peptidyl transferase center and thus would serve to optimize ribosomal fidelity. In Syntrophotalea carbinolica (strain DSM 2380 / NBRC 103641 / GraBd1) (Pelobacter carbinolicus), this protein is Dual-specificity RNA methyltransferase RlmN.